Here is a 496-residue protein sequence, read N- to C-terminus: NAD(P)H-quinone oxidoreductase subunit 2, chloroplastic (496 aa).

The next 14 helical transmembrane spans lie at 14–34, 42–62, 79–99, 109–129, 133–153, 167–187, 210–230, 244–264, 281–301, 305–325, 334–354, 377–397, 400–420, and 469–489; these read SFLPEGILIFNIIFILILDLV, MLVKISFIGLLLSMLTLIQQW, FTTCFRLIISLCCILCIPLSF, LTEFIIFLLFTTLGAMILSSA, ITIFISLECLGLGSYLLTGYV, LIIGGTSSSIFAYGLSWLYGL, LASWFAYICIIVGIGFKLSLV, PTPVVAFLSIISKAGALALTI, ILQILAILSMIVGNLLAMVET, RILTYSSIAQAGYLLIGIVAG, LVYMIFYLFMNIGAFSCIILF, ASCLSLCLLSLAGIPPLTGFF, ILLFWSAWQSGFYFLVMTGIF, and IYLCTFISGFVGIFMNPVIYF.

It belongs to the complex I subunit 2 family. As to quaternary structure, NDH is composed of at least 16 different subunits, 5 of which are encoded in the nucleus.

Its subcellular location is the plastid. It is found in the chloroplast thylakoid membrane. It carries out the reaction a plastoquinone + NADH + (n+1) H(+)(in) = a plastoquinol + NAD(+) + n H(+)(out). It catalyses the reaction a plastoquinone + NADPH + (n+1) H(+)(in) = a plastoquinol + NADP(+) + n H(+)(out). In terms of biological role, NDH shuttles electrons from NAD(P)H:plastoquinone, via FMN and iron-sulfur (Fe-S) centers, to quinones in the photosynthetic chain and possibly in a chloroplast respiratory chain. The immediate electron acceptor for the enzyme in this species is believed to be plastoquinone. Couples the redox reaction to proton translocation, and thus conserves the redox energy in a proton gradient. The sequence is that of NAD(P)H-quinone oxidoreductase subunit 2, chloroplastic from Chara vulgaris (Common stonewort).